A 275-amino-acid polypeptide reads, in one-letter code: 4-hydroxy-3-methylbut-2-enyl diphosphate reductase (275 aa).

Cys12 lines the [4Fe-4S] cluster pocket. The (2E)-4-hydroxy-3-methylbut-2-enyl diphosphate site is built by His40 and His70. Dimethylallyl diphosphate-binding residues include His40 and His70. 2 residues coordinate isopentenyl diphosphate: His40 and His70. [4Fe-4S] cluster is bound at residue Cys92. His119 lines the (2E)-4-hydroxy-3-methylbut-2-enyl diphosphate pocket. His119 contributes to the dimethylallyl diphosphate binding site. Isopentenyl diphosphate is bound at residue His119. Catalysis depends on Glu121, which acts as the Proton donor. Position 151 (Thr151) interacts with (2E)-4-hydroxy-3-methylbut-2-enyl diphosphate. Cys181 is a binding site for [4Fe-4S] cluster. Ser209, Ser210, Asn211, and Ser251 together coordinate (2E)-4-hydroxy-3-methylbut-2-enyl diphosphate. Positions 209, 210, 211, and 251 each coordinate dimethylallyl diphosphate. Ser209, Ser210, Asn211, and Ser251 together coordinate isopentenyl diphosphate.

This sequence belongs to the IspH family. Requires [4Fe-4S] cluster as cofactor.

It catalyses the reaction isopentenyl diphosphate + 2 oxidized [2Fe-2S]-[ferredoxin] + H2O = (2E)-4-hydroxy-3-methylbut-2-enyl diphosphate + 2 reduced [2Fe-2S]-[ferredoxin] + 2 H(+). It carries out the reaction dimethylallyl diphosphate + 2 oxidized [2Fe-2S]-[ferredoxin] + H2O = (2E)-4-hydroxy-3-methylbut-2-enyl diphosphate + 2 reduced [2Fe-2S]-[ferredoxin] + 2 H(+). It functions in the pathway isoprenoid biosynthesis; dimethylallyl diphosphate biosynthesis; dimethylallyl diphosphate from (2E)-4-hydroxy-3-methylbutenyl diphosphate: step 1/1. Its pathway is isoprenoid biosynthesis; isopentenyl diphosphate biosynthesis via DXP pathway; isopentenyl diphosphate from 1-deoxy-D-xylulose 5-phosphate: step 6/6. Catalyzes the conversion of 1-hydroxy-2-methyl-2-(E)-butenyl 4-diphosphate (HMBPP) into a mixture of isopentenyl diphosphate (IPP) and dimethylallyl diphosphate (DMAPP). Acts in the terminal step of the DOXP/MEP pathway for isoprenoid precursor biosynthesis. The sequence is that of 4-hydroxy-3-methylbut-2-enyl diphosphate reductase from Thermotoga petrophila (strain ATCC BAA-488 / DSM 13995 / JCM 10881 / RKU-1).